Consider the following 206-residue polypeptide: tRNA(Phe) 7-((3-amino-3-carboxypropyl)-4-demethylwyosine(37)-N(4))-methyltransferase 2 (206 aa).

The protein belongs to the TYW3 family.

It carries out the reaction 4-demethyl-7-[(3S)-3-amino-3-carboxypropyl]wyosine(37) in tRNA(Phe) + S-adenosyl-L-methionine = 7-[(3S)-3-amino-3-carboxypropyl]wyosine(37) in tRNA(Phe) + S-adenosyl-L-homocysteine + H(+). Functionally, S-adenosyl-L-methionine-dependent methyltransferase that acts as a component of the wyosine derivatives biosynthesis pathway. Probably methylates N-4 position of wybutosine-86 to produce wybutosine-72. In Pyrococcus furiosus (strain ATCC 43587 / DSM 3638 / JCM 8422 / Vc1), this protein is tRNA(Phe) 7-((3-amino-3-carboxypropyl)-4-demethylwyosine(37)-N(4))-methyltransferase 2.